A 2373-amino-acid polypeptide reads, in one-letter code: Highly reducing polyketide synthase (2373 aa).

Residues 19-446 (QEPIAVVGIA…GSNAHVIVEE (428 aa)) form the Ketosynthase family 3 (KS3) domain. Residues Cys192, His329, and His369 each act as for beta-ketoacyl synthase activity in the active site. The segment at 560-874 (IFTGQGAQWP…QYTSAMARGA (315 aa)) is malonyl-CoA:ACP transacylase (MAT) domain. Residue Ser652 is the For malonyltransferase activity of the active site. An N-terminal hotdog fold region spans residues 942–1078 (HDLLGSKVLG…GLIRIDEDVP (137 aa)). The tract at residues 942–1241 (HDLLGSKVLG…LSGLRYTRID (300 aa)) is dehydratase (DH) domain. Residues 942-1246 (HDLLGSKVLG…YTRIDTGPSV (305 aa)) enclose the PKS/mFAS DH domain. His974 serves as the catalytic Proton acceptor; for dehydratase activity. The segment at 1090–1246 (SHQVDASLWH…YTRIDTGPSV (157 aa)) is C-terminal hotdog fold. The active-site Proton donor; for dehydratase activity is the Asp1154. The interval 1669-1985 (GTTDSLIYSE…SANHIGKIVI (317 aa)) is enoyl reductase (ER) domain. Positions 2010 to 2187 (GYLLIGGLKG…NSVDLGAIQD (178 aa)) are ketoreductase (KR) domain. Residues 2294–2370 (AIHDAVIDVT…QLAQKIVARL (77 aa)) form the Carrier domain. At Ser2330 the chain carries O-(pantetheine 4'-phosphoryl)serine.

Pantetheine 4'-phosphate serves as cofactor.

It participates in mycotoxin biosynthesis. Its function is as follows. Highly reducing polyketide synthase; part of the gene cluster that mediates the biosynthesis of brefeldin A (BFA), a protein transport inhibitor that shows antiviral, antifungal, and antitumor properties. The proposed biosynthesis of BFA involves formation of an acyclic polyketide chain that is differentially tailored throughout the backbone. The highly reducing polyketide synthase Bref-PKS is proposed to synthesize the precisely reduced octaketide precursor, which could then be directly offloaded by the thiohydrolase enzyme Bref-TH followed by a cytochrome P450 monooxygenase-mediated formation of the cyclopentane ring and macrocyclization to afford 7-deoxy BFA. Alternatively, the first ring annulation can also occur on the ACP-tethered intermediate before the thiohydrolase release and lactonization. The C7-hydroxylation by another cytochrome P450 monooxygenase is believed to be the final step in the process to obtain the final structure of BFA. In addition to the HRPKS Bref-PKS and the thiohydrolase Bref-TH, the brefeldin A biosynthesis cluster contains 4 cytochrome p450 monooxygenases (called orf3 to orf6), as well a the probable cluster-specific transcription regulator orf8. The protein is Highly reducing polyketide synthase of Eupenicillium brefeldianum (Penicillium brefeldianum).